The primary structure comprises 959 residues: General transcription factor II-I repeat domain-containing protein 1 (959 aa).

Residues Lys27 and Lys94 each participate in a glycyl lysine isopeptide (Lys-Gly) (interchain with G-Cter in SUMO2) cross-link. A compositionally biased stretch (basic and acidic residues) spans 96–106; sequence PEAEHPKKVQR. The disordered stretch occupies residues 96-117; that stretch reads PEAEHPKKVQRGEGGGRSLPRS. The GTF2I-like 1 repeat unit spans residues 119 to 213; it reads LEHGSDVYLL…LEDGGRDSKA (95 aa). Glycyl lysine isopeptide (Lys-Gly) (interchain with G-Cter in SUMO2) cross-links involve residues Lys184, Lys212, Lys225, Lys238, Lys271, Lys294, Lys308, Lys337, Lys436, Lys439, and Lys443. Residues 230–250 are disordered; it reads CGLHGQAPKVPPQDLPPTATS. One copy of the GTF2I-like 2 repeat lies at 342–436; it reads IKETEDINTL…FDERIFTGNK (95 aa). Ser448 is modified (phosphoserine). A disordered region spans residues 468–492; it reads NARSDKGSMSEDCGPGTSGELGGLR. The GTF2I-like 3 repeat unit spans residues 556–650; that stretch reads DSHGDVIRPL…ELLTEGVKEP (95 aa). Residues Lys567, Lys579, Lys588, Lys622, Lys638, and Lys648 each participate in a glycyl lysine isopeptide (Lys-Gly) (interchain with G-Cter in SUMO2) cross-link. Ser654 is modified (phosphoserine). Residues 654 to 679 are disordered; the sequence is SQGTASSLGFSPPALPPERDSGDPLV. Glycyl lysine isopeptide (Lys-Gly) (interchain with G-Cter in SUMO2) cross-links involve residues Pro669, Pro670, Asp680, and Lys684. Residue Gln686 is modified to Phosphoserine. GTF2I-like repeat units follow at residues 696–790 and 793–887; these read LSRI…KPDE and ANRL…ICND. Glycyl lysine isopeptide (Lys-Gly) (interchain with G-Cter in SUMO2) cross-links involve residues Ile701, Lys724, Lys732, Lys772, Lys774, Lys787, Lys829, Lys889, and Lys893. The disordered stretch occupies residues 892–927; the sequence is AKDSSIPKRKRKRVSEGNSVSSSSSSSSSSSSNPDS. Residues 898-905 carry the Nuclear localization signal motif; the sequence is PKRKRKRV. A compositionally biased stretch (low complexity) spans 910–923; that stretch reads SVSSSSSSSSSSSS.

Belongs to the TFII-I family. As to quaternary structure, interacts with the retinoblastoma protein (RB1) via its C-terminus. In terms of tissue distribution, highly expressed in adult skeletal muscle, heart, fibroblast, bone and fetal tissues. Expressed at lower levels in all other tissues tested.

Its subcellular location is the nucleus. Functionally, may be a transcription regulator involved in cell-cycle progression and skeletal muscle differentiation. May repress GTF2I transcriptional functions, by preventing its nuclear residency, or by inhibiting its transcriptional activation. May contribute to slow-twitch fiber type specificity during myogenesis and in regenerating muscles. Binds troponin I slow-muscle fiber enhancer (USE B1). Binds specifically and with high affinity to the EFG sequences derived from the early enhancer of HOXC8. The protein is General transcription factor II-I repeat domain-containing protein 1 (GTF2IRD1) of Homo sapiens (Human).